Here is a 429-residue protein sequence, read N- to C-terminus: Uterine milk protein (429 aa).

Residues 1-25 (MSHRRMQLALSLVFILCGLFNSIFC) form the signal peptide. Asparagine 222 and asparagine 268 each carry an N-linked (GlcNAc...) asparagine glycan.

It belongs to the serpin family. UTMP subfamily. In terms of processing, glycosylated; carries the so-called mannose 6-phosphate lysosomal recognition marker on its carbohydrate chains. As to expression, secreted by ovine endometrium under the influence of progesterone.

This Ovis aries (Sheep) protein is Uterine milk protein.